A 406-amino-acid chain; its full sequence is Peptidase T (406 aa).

His82 contacts Zn(2+). Asp84 is a catalytic residue. Residue Asp142 coordinates Zn(2+). Glu176 functions as the Proton acceptor in the catalytic mechanism. 3 residues coordinate Zn(2+): Glu177, Asp199, and His381.

The protein belongs to the peptidase M20B family. Zn(2+) is required as a cofactor.

The protein resides in the cytoplasm. The catalysed reaction is Release of the N-terminal residue from a tripeptide.. In terms of biological role, cleaves the N-terminal amino acid of tripeptides. The sequence is that of Peptidase T from Streptococcus agalactiae serotype V (strain ATCC BAA-611 / 2603 V/R).